A 465-amino-acid chain; its full sequence is 5-cytosine rRNA methyltransferase nsun-4 (465 aa).

The transit peptide at 1 to 6 directs the protein to the mitochondrion; sequence MSCLRQ. Residues 106–130 are compositionally biased toward basic and acidic residues; it reads QAIETKRKSVEEKANRETQKVKHEI. The segment at 106-145 is disordered; the sequence is QAIETKRKSVEEKANRETQKVKHEISNPSTSTNTEDSEPD. S-adenosyl-L-methionine-binding positions include 260–266, Asp-283, Asp-316, and Asp-335; that span reads CAAPGGK. The active-site Nucleophile is Cys-390.

The protein belongs to the class I-like SAM-binding methyltransferase superfamily. RsmB/NOP family.

Its subcellular location is the mitochondrion. It catalyses the reaction a cytidine in rRNA + S-adenosyl-L-methionine = a 5-methylcytidine in rRNA + S-adenosyl-L-homocysteine + H(+). The catalysed reaction is a cytidine in tRNA + S-adenosyl-L-methionine = a 5-methylcytidine in tRNA + S-adenosyl-L-homocysteine + H(+). Its function is as follows. Mitochondrial methyltransferase which methylates cytosine to 5-methylcytosine (m5C) in rRNAs and tRNAs at multiple sites. May play a role in the translation of leucine and proline codons. The sequence is that of 5-cytosine rRNA methyltransferase nsun-4 from Caenorhabditis elegans.